Consider the following 318-residue polypeptide: Basic leucine zipper (bZIP) transcription factor atfB (318 aa).

The segment at 114–157 (FNSSPPEYAPPKHRSSLSEQSQTDGYGVSTRRRKASAIDQCEQQ) is disordered. A basic motif region spans residues 160–199 (REKREKFLERNRLAASKCRQKKKEHTKLLETRFREVSNKK). In terms of domain architecture, bZIP spans 160–223 (REKREKFLER…LNLKNEMLRH (64 aa)). Residues 202 to 216 (LESEIEHLRSEVLNL) are leucine-zipper. The disordered stretch occupies residues 275-301 (DGPMQLPSEMGSPLDQRRDSEQSIMTE).

Belongs to the bZIP family. ATF subfamily.

The protein localises to the nucleus. Its function is as follows. Transcription factor that acts as a key player in the regulatory circuit that integrates secondary metabolism and cellular response to oxidative stress. Regulates the genes involved in development and stress response through direct binding to their promoters. This chain is Basic leucine zipper (bZIP) transcription factor atfB, found in Aspergillus flavus (strain ATCC 200026 / FGSC A1120 / IAM 13836 / NRRL 3357 / JCM 12722 / SRRC 167).